A 285-amino-acid chain; its full sequence is Probable fructose-bisphosphate aldolase (285 aa).

S50 serves as a coordination point for D-glyceraldehyde 3-phosphate. D85 acts as the Proton donor in catalysis. The Zn(2+) site is built by H86, D107, E137, and H181. Residue G182 participates in dihydroxyacetone phosphate binding. H209 lines the Zn(2+) pocket. Dihydroxyacetone phosphate-binding positions include 210–212 (GGT) and 231–234 (NVNT). Residues T212 and T234 each carry the phosphothreonine modification.

This sequence belongs to the class II fructose-bisphosphate aldolase family. Zn(2+) serves as cofactor. In terms of processing, phosphorylated during sporulation.

The enzyme catalyses beta-D-fructose 1,6-bisphosphate = D-glyceraldehyde 3-phosphate + dihydroxyacetone phosphate. It functions in the pathway carbohydrate degradation; glycolysis; D-glyceraldehyde 3-phosphate and glycerone phosphate from D-glucose: step 4/4. Functionally, catalyzes the aldol condensation of dihydroxyacetone phosphate (DHAP or glycerone-phosphate) with glyceraldehyde 3-phosphate (G3P) to form fructose 1,6-bisphosphate (FBP) in gluconeogenesis and the reverse reaction in glycolysis. The protein is Probable fructose-bisphosphate aldolase (fbaA) of Bacillus subtilis (strain 168).